The following is a 226-amino-acid chain: 2-C-methyl-D-erythritol 4-phosphate cytidylyltransferase (226 aa).

It belongs to the IspD/TarI cytidylyltransferase family. IspD subfamily.

The catalysed reaction is 2-C-methyl-D-erythritol 4-phosphate + CTP + H(+) = 4-CDP-2-C-methyl-D-erythritol + diphosphate. Its pathway is isoprenoid biosynthesis; isopentenyl diphosphate biosynthesis via DXP pathway; isopentenyl diphosphate from 1-deoxy-D-xylulose 5-phosphate: step 2/6. In terms of biological role, catalyzes the formation of 4-diphosphocytidyl-2-C-methyl-D-erythritol from CTP and 2-C-methyl-D-erythritol 4-phosphate (MEP). In Rhodococcus jostii (strain RHA1), this protein is 2-C-methyl-D-erythritol 4-phosphate cytidylyltransferase.